Consider the following 217-residue polypeptide: Large ribosomal subunit protein uL3 (217 aa).

The disordered stretch occupies residues 127 to 162 (GFSRGPMSHGSKNHRAPGSTGAGTTPGRIYPGKRMA). Positions 142–153 (APGSTGAGTTPG) are enriched in low complexity.

It belongs to the universal ribosomal protein uL3 family. In terms of assembly, part of the 50S ribosomal subunit. Forms a cluster with proteins L14 and L19.

Functionally, one of the primary rRNA binding proteins, it binds directly near the 3'-end of the 23S rRNA, where it nucleates assembly of the 50S subunit. The polypeptide is Large ribosomal subunit protein uL3 (Prochlorococcus marinus (strain AS9601)).